Here is a 347-residue protein sequence, read N- to C-terminus: NADH-quinone oxidoreductase subunit H (347 aa).

The next 9 helical transmembrane spans lie at leucine 13–leucine 33, proline 50–phenylalanine 70, glycine 82–isoleucine 102, valine 115–glycine 135, isoleucine 161–valine 181, phenylalanine 198–leucine 218, phenylalanine 248–valine 268, valine 286–valine 306, and valine 325–glycine 345.

It belongs to the complex I subunit 1 family. In terms of assembly, NDH-1 is composed of 14 different subunits. Subunits NuoA, H, J, K, L, M, N constitute the membrane sector of the complex.

It localises to the cell inner membrane. The enzyme catalyses a quinone + NADH + 5 H(+)(in) = a quinol + NAD(+) + 4 H(+)(out). In terms of biological role, NDH-1 shuttles electrons from NADH, via FMN and iron-sulfur (Fe-S) centers, to quinones in the respiratory chain. The immediate electron acceptor for the enzyme in this species is believed to be ubiquinone. Couples the redox reaction to proton translocation (for every two electrons transferred, four hydrogen ions are translocated across the cytoplasmic membrane), and thus conserves the redox energy in a proton gradient. This subunit may bind ubiquinone. The chain is NADH-quinone oxidoreductase subunit H from Brucella ovis (strain ATCC 25840 / 63/290 / NCTC 10512).